The chain runs to 227 residues: Thymidine kinase (227 aa).

Residues Gly-15–Thr-22 and Asp-87–Gln-90 contribute to the ATP site. The Proton acceptor role is filled by Glu-88. Residues Cys-144, Cys-147, Cys-176, and Cys-179 each contribute to the Zn(2+) site. The interval Arg-198–Ala-227 is disordered. Positions Ala-217–Ala-227 are enriched in low complexity.

This sequence belongs to the thymidine kinase family. In terms of assembly, homotetramer.

Its subcellular location is the cytoplasm. It catalyses the reaction thymidine + ATP = dTMP + ADP + H(+). The sequence is that of Thymidine kinase from Salinibacter ruber (strain DSM 13855 / M31).